Consider the following 1064-residue polypeptide: Protein NLRC3 (1064 aa).

Positions 138-459 constitute an NACHT domain; the sequence is RVSLTIGVAG…YCFIHLSLQE (322 aa). 144–151 lines the ATP pocket; that stretch reads GVAGVGKT. 16 LRR repeats span residues 338 to 362, 570 to 593, 632 to 662, 664 to 687, 692 to 715, 720 to 743, 748 to 771, 776 to 799, 804 to 827, 832 to 855, 860 to 883, 888 to 911, 916 to 939, 972 to 995, 1000 to 1022, and 1028 to 1051; these read LGHL…LCEL, LSEL…TLAG, LPQL…VLSG, DCRI…ALAR, NRSL…ALAD, NRTL…CVAE, NQTI…QMAD, NRSL…ALAE, NQIL…VLMR, NQTL…ALTQ, NNTL…AIAV, NHSL…ALGQ, NRTL…SVAG, NRTL…ALAN, NSSL…IFVA, and NHGL…MISE.

The protein belongs to the NLRP family. In terms of assembly, directly interacts (via CARD) with TMEM173/STING; this interaction reduces TMEM173 trafficking to the perinuclear region in response to interferon stimulatory DNA. Also interacts, but to a lesser extent, with TBK1. Interacts with TRAF6; this interaction results in decreased TRAF6 'Lys-63'-linked polyubiquitination, but leaves 'Lys-48'-linked chains unchanged, promoting TRAF6 protein degradation. Interacts with PIK3R1/PIK3R2; this interaction disrupts the association between PIK3R1/PIK3R2 and the p110 catalytic subunit PIK3CA/PIK3CB/PIK3CD and reduces PIK3R1/PIK3R2 activation. Weakly interacts with PYCARD/ASC. Interacts with CASP1 and CASP5. Expressed in bone marrow-derived macrophages.

The protein localises to the cytoplasm. In terms of biological role, negative regulator of the innate immune response. Attenuates signaling pathways activated by Toll-like receptors (TLRs) and the DNA sensor STING/TMEM173 in response to pathogen-associated molecular patterns, such as intracellular poly(dA:dT), but not poly(I:C), or in response to DNA virus infection, including that of Herpes simplex virus 1 (HSV1). May affect TLR4 signaling by acting at the level of TRAF6 ubiquitination, decreasing the activating 'Lys-63'-linked ubiquitination and leaving unchanged the degradative 'Lys-48'-linked ubiquitination. Inhibits the PI3K-AKT-mTOR pathway possibly by directly interacting with the posphatidylinositol 3-kinase regulatory subunit p85 (PIK3R1/PIK3R2) and disrupting the association between PIK3R1/PIK3R2 and the catalytic subunit p110 (PIK3CA/PIK3CB/PIK3CD) and reducing PIK3R1/PIK3R2 activation. Via its regulation of the PI3K-AKT-mTOR pathway, controls cell proliferation, predominantly in intestinal epithelial cells. May also affect NOD1- or NOD2-mediated NF-kappa-B activation. Might also affect the inflammatory response by preventing NLRP3 inflammasome formation, CASP1 cleavage and IL1B maturation. This is Protein NLRC3 (Nlrc3) from Mus musculus (Mouse).